A 253-amino-acid polypeptide reads, in one-letter code: Large ribosomal subunit protein bL28m (253 aa).

The N-terminal 55 residues, 1–55 (MPLHKYPPALWDVLKLKDGIYARLPEHYRRSLLEKHKPYPVHWKPHGLKYRLNPK), are a transit peptide targeting the mitochondrion.

The protein belongs to the bacterial ribosomal protein bL28 family. As to quaternary structure, component of the mitochondrial ribosome large subunit (39S) which comprises a 16S rRNA and about 50 distinct proteins.

It is found in the mitochondrion. This chain is Large ribosomal subunit protein bL28m (mrpl28), found in Xenopus laevis (African clawed frog).